A 388-amino-acid polypeptide reads, in one-letter code: 3beta-hydroxysteroid dehydrogenase dhs-16 (388 aa).

A helical transmembrane segment spans residues 2–22; sequence LELIYILPLLCFVYFLFRRFV. Catalysis depends on Tyr-188, which acts as the Proton acceptor. 2 helical membrane passes run 300–320 and 346–366; these read AIFMFIPLSIFPTALQDWILA and IQWIQFLSQIAIIPLLYTIFF.

Belongs to the short-chain dehydrogenases/reductases (SDR) family. Strongly expressed in the hypodermis and posterior pharyngeal bulb and in a number of unidentified neurons of the head and tail.

It is found in the membrane. The catalysed reaction is lathosterol + NAD(+) = 5alpha-cholest-7-en-3-one + NADH + H(+). Its pathway is steroid hormone biosynthesis; dafachronic acid biosynthesis. In terms of biological role, 3beta-hydroxysteroid dehydrogenase that converts 3beta-hydroxysteroids to 3-ketosteroids, an essential step in the production of dafachronic acids from cholesterol. Catalyzes the dehydrogenation of lathosterol (5alpha-cholest-7-en-3beta-ol) to lathosterone (5alpha-cholest-7-en-3-one), a step required for maximal biosynthesis of Delta(7)-dafachronic acid. Dafachronic acids act as ligands and bind directly to the nuclear hormone receptor (NHR) daf-12, suppressing dauer formation and inducing reproductive growth, they can also regulate C.elegans lifespan. The chain is 3beta-hydroxysteroid dehydrogenase dhs-16 (dhs-16) from Caenorhabditis elegans.